A 299-amino-acid chain; its full sequence is AUGMIN subunit 1 (299 aa).

An N-acetylserine modification is found at S2. 2 coiled-coil regions span residues 76-96 and 164-184; these read RLKA…LESA and RKAI…EDDV.

Belongs to the HAUS1 family. In terms of assembly, part of the augmin complex composed of 8 subunits. The complex acts on microtubules and interacts with gamma-tubulin in spindles and the phragmoplast. Interacts with AUG3.

The protein resides in the cytoplasm. It is found in the cytoskeleton. It localises to the spindle. Its subcellular location is the phragmoplast. Involved in microtubules reorganization during spindle and phragmoplast development. The sequence is that of AUGMIN subunit 1 from Arabidopsis thaliana (Mouse-ear cress).